Consider the following 345-residue polypeptide: Holliday junction branch migration complex subunit RuvB (345 aa).

The tract at residues 4–182 (PDRIVSAVQR…FGIPIRLEFY (179 aa)) is large ATPase domain (RuvB-L). ATP-binding positions include Arg22, Gly63, Lys66, Thr67, Thr68, 129–131 (EDY), Arg172, Tyr182, and Arg219. Thr67 serves as a coordination point for Mg(2+). The tract at residues 183–253 (TVDELQAIVT…IADAALSRLE (71 aa)) is small ATPAse domain (RuvB-S). The interval 256 to 345 (ALGLDQLDRR…QSQINLFEEE (90 aa)) is head domain (RuvB-H). DNA is bound by residues Arg292, Arg311, and Arg316.

It belongs to the RuvB family. In terms of assembly, homohexamer. Forms an RuvA(8)-RuvB(12)-Holliday junction (HJ) complex. HJ DNA is sandwiched between 2 RuvA tetramers; dsDNA enters through RuvA and exits via RuvB. An RuvB hexamer assembles on each DNA strand where it exits the tetramer. Each RuvB hexamer is contacted by two RuvA subunits (via domain III) on 2 adjacent RuvB subunits; this complex drives branch migration. In the full resolvosome a probable DNA-RuvA(4)-RuvB(12)-RuvC(2) complex forms which resolves the HJ.

The protein localises to the cytoplasm. The enzyme catalyses ATP + H2O = ADP + phosphate + H(+). The RuvA-RuvB-RuvC complex processes Holliday junction (HJ) DNA during genetic recombination and DNA repair, while the RuvA-RuvB complex plays an important role in the rescue of blocked DNA replication forks via replication fork reversal (RFR). RuvA specifically binds to HJ cruciform DNA, conferring on it an open structure. The RuvB hexamer acts as an ATP-dependent pump, pulling dsDNA into and through the RuvAB complex. RuvB forms 2 homohexamers on either side of HJ DNA bound by 1 or 2 RuvA tetramers; 4 subunits per hexamer contact DNA at a time. Coordinated motions by a converter formed by DNA-disengaged RuvB subunits stimulates ATP hydrolysis and nucleotide exchange. Immobilization of the converter enables RuvB to convert the ATP-contained energy into a lever motion, pulling 2 nucleotides of DNA out of the RuvA tetramer per ATP hydrolyzed, thus driving DNA branch migration. The RuvB motors rotate together with the DNA substrate, which together with the progressing nucleotide cycle form the mechanistic basis for DNA recombination by continuous HJ branch migration. Branch migration allows RuvC to scan DNA until it finds its consensus sequence, where it cleaves and resolves cruciform DNA. In Chelativorans sp. (strain BNC1), this protein is Holliday junction branch migration complex subunit RuvB.